We begin with the raw amino-acid sequence, 160 residues long: Zinc finger A20 and AN1 domain-containing stress-associated protein 6 (160 aa).

An A20-type zinc finger spans residues 18-52 (PEAPILCVNNCGFFGSRMTENMCSKCYRDTVKAKT). Residues Cys-24, Cys-28, Cys-40, and Cys-43 each coordinate Zn(2+). The interval 73 to 94 (EVTDGGSGSVADGKQVMEEDTP) is disordered. The segment at 95–141 (KPPSNRCLSCRKKVGLTGFKCRCGGTFCSMHRYADSHKCTFDYKQVG) adopts an AN1-type zinc-finger fold. Residues Cys-101, Cys-104, Cys-115, Cys-117, Cys-122, His-125, His-131, and Cys-133 each coordinate Zn(2+).

May be involved in environmental stress response. The protein is Zinc finger A20 and AN1 domain-containing stress-associated protein 6 (SAP6) of Oryza sativa subsp. japonica (Rice).